Consider the following 588-residue polypeptide: Secreted triacylglycerol lipase LIP1 (588 aa).

The first 20 residues, 1-20 (MRFSGFVSGLGLGLLTAVSA), serve as a signal peptide directing secretion. Ser258 serves as the catalytic Acyl-ester intermediate. An N-linked (GlcNAc...) asparagine glycan is attached at Asn400.

The protein belongs to the type-B carboxylesterase/lipase family.

The protein localises to the secreted. It carries out the reaction a triacylglycerol + H2O = a diacylglycerol + a fatty acid + H(+). Its function is as follows. Secreted acylglycerol lipase required for efficient utilization of saturated triglyceride lipids. Is not involved in virulence. The protein is Secreted triacylglycerol lipase LIP1 of Gibberella zeae (strain ATCC MYA-4620 / CBS 123657 / FGSC 9075 / NRRL 31084 / PH-1) (Wheat head blight fungus).